The sequence spans 268 residues: GTP cyclohydrolase FolE2 (268 aa).

Belongs to the GTP cyclohydrolase IV family.

It catalyses the reaction GTP + H2O = 7,8-dihydroneopterin 3'-triphosphate + formate + H(+). It functions in the pathway cofactor biosynthesis; 7,8-dihydroneopterin triphosphate biosynthesis; 7,8-dihydroneopterin triphosphate from GTP: step 1/1. In terms of biological role, converts GTP to 7,8-dihydroneopterin triphosphate. This is GTP cyclohydrolase FolE2 from Methylococcus capsulatus (strain ATCC 33009 / NCIMB 11132 / Bath).